A 302-amino-acid polypeptide reads, in one-letter code: MAHDMLFRGVAPALVTPFTSDDDIDEAAFRRLIDAQIEGGVSALVVLGTTGENPTITEDERRRIVDAALDAADGRVPVIVGTGTNNTDESVAFSKAAVDAGADGLLVVGPYYNKPSQAGFAAHVETIAAAAEAPIILYNVPGRTSFNIAPETALHLAEEVPHVAGIKEASGDIEQIDDLLAHRPDGFGVYSGDDEMTLPLLAMGGDGAVSVISNALPGPFCELVAAGLDDDLATARDRHAELLPAMRACFLETNPVPIKDVCAALGWMEPHVRLPLTPMDERSPVRQRVLSAFDDLIDVTVA.

Threonine 50 lines the pyruvate pocket. Tyrosine 138 acts as the Proton donor/acceptor in catalysis. The active-site Schiff-base intermediate with substrate is lysine 167. Valine 209 lines the pyruvate pocket.

This sequence belongs to the DapA family. As to quaternary structure, homotetramer; dimer of dimers.

The protein localises to the cytoplasm. It catalyses the reaction L-aspartate 4-semialdehyde + pyruvate = (2S,4S)-4-hydroxy-2,3,4,5-tetrahydrodipicolinate + H2O + H(+). The protein operates within amino-acid biosynthesis; L-lysine biosynthesis via DAP pathway; (S)-tetrahydrodipicolinate from L-aspartate: step 3/4. In terms of biological role, catalyzes the condensation of (S)-aspartate-beta-semialdehyde [(S)-ASA] and pyruvate to 4-hydroxy-tetrahydrodipicolinate (HTPA). This is 4-hydroxy-tetrahydrodipicolinate synthase from Salinibacter ruber (strain DSM 13855 / M31).